The following is a 172-amino-acid chain: UPF0398 protein gbs0290 (172 aa).

The protein belongs to the UPF0398 family.

The sequence is that of UPF0398 protein gbs0290 from Streptococcus agalactiae serotype III (strain NEM316).